We begin with the raw amino-acid sequence, 402 residues long: Major outer membrane porin (402 aa).

The signal sequence occupies residues 1–22; the sequence is MKKLLKSALLFAATGSALSLQA.

The protein belongs to the chlamydial porin (CP) (TC 1.B.2) family. In terms of assembly, part of a disulfide cross-linked outer membrane complex (COMC) composed of the major outer membrane porin (MOMP), the small cysteine-rich protein (OmcA) and the large cysteine-rich periplasmic protein (OmcB).

The protein resides in the cell outer membrane. In terms of biological role, in elementary bodies (EBs, the infectious stage, which is able to survive outside the host cell) provides the structural integrity of the outer envelope through disulfide cross-links with the small cysteine-rich protein and the large cysteine-rich periplasmic protein. It has been described in publications as the Sarkosyl-insoluble COMC (Chlamydia outer membrane complex), and serves as the functional equivalent of peptidoglycan. It is present but some of the disulfide bonds are reduced in reticulate bodies (RBs). Functionally, permits diffusion of specific solutes through the outer membrane. The chain is Major outer membrane porin (ompA) from Chlamydophila psittaci (strain ATCC VR-125 / 6BC) (Chlamydia psittaci).